Consider the following 2067-residue polypeptide: Lipoxygenase homology domain-containing protein 1 (2067 aa).

PLAT domains lie at 43-160, 172-287, 296-412, 425-540, 553-673, 684-803, 814-934, 969-1087, 1100-1225, 1254-1372, 1421-1539, 1552-1667, 1679-1797, 1810-1931, and 1948-2064; these read RVYE…RDLL, NKYE…RDIL, ITYI…RQLY, FPWS…REMT, ARYH…RELL, FRYH…VELY, VHYE…RELL, TTFS…RDLF, VPYE…RELV, VLYS…RLFY, IPYY…RVFD, VLYE…CEMC, TSYT…RDFA, TTYE…VFEV, and VKYE…RDLF.

Its subcellular location is the cell projection. The protein localises to the stereocilium. Functionally, involved in hearing. Required for normal function of hair cells in the inner ear. The polypeptide is Lipoxygenase homology domain-containing protein 1 (LOXHD1) (Homo sapiens (Human)).